Here is a 352-residue protein sequence, read N- to C-terminus: Probable dual-specificity RNA methyltransferase RlmN (352 aa).

Glu-93 (proton acceptor) is an active-site residue. Positions 99 to 333 (FNYGYSVCVT…IRLERGSSID (235 aa)) constitute a Radical SAM core domain. A disulfide bond links Cys-106 and Cys-336. Residues Cys-113, Cys-117, and Cys-120 each coordinate [4Fe-4S] cluster. S-adenosyl-L-methionine is bound by residues 164-165 (GE), Ser-196, and Asn-295. Catalysis depends on Cys-336, which acts as the S-methylcysteine intermediate.

The protein belongs to the radical SAM superfamily. RlmN family. [4Fe-4S] cluster is required as a cofactor.

It is found in the cytoplasm. It catalyses the reaction adenosine(2503) in 23S rRNA + 2 reduced [2Fe-2S]-[ferredoxin] + 2 S-adenosyl-L-methionine = 2-methyladenosine(2503) in 23S rRNA + 5'-deoxyadenosine + L-methionine + 2 oxidized [2Fe-2S]-[ferredoxin] + S-adenosyl-L-homocysteine. The catalysed reaction is adenosine(37) in tRNA + 2 reduced [2Fe-2S]-[ferredoxin] + 2 S-adenosyl-L-methionine = 2-methyladenosine(37) in tRNA + 5'-deoxyadenosine + L-methionine + 2 oxidized [2Fe-2S]-[ferredoxin] + S-adenosyl-L-homocysteine. Its function is as follows. Specifically methylates position 2 of adenine 2503 in 23S rRNA and position 2 of adenine 37 in tRNAs. This Malacoplasma penetrans (strain HF-2) (Mycoplasma penetrans) protein is Probable dual-specificity RNA methyltransferase RlmN.